A 371-amino-acid polypeptide reads, in one-letter code: Glutamate 5-kinase (371 aa).

An ATP-binding site is contributed by Lys10. 3 residues coordinate substrate: Ser50, Asp137, and Asn149. Residues 169–170 (SD) and 208–214 (TGGMYTK) contribute to the ATP site. Residues 274–352 (QGKVYIDDGA…EEIKNILGED (79 aa)) enclose the PUA domain.

It belongs to the glutamate 5-kinase family.

The protein localises to the cytoplasm. The catalysed reaction is L-glutamate + ATP = L-glutamyl 5-phosphate + ADP. Its pathway is amino-acid biosynthesis; L-proline biosynthesis; L-glutamate 5-semialdehyde from L-glutamate: step 1/2. In terms of biological role, catalyzes the transfer of a phosphate group to glutamate to form L-glutamate 5-phosphate. The chain is Glutamate 5-kinase from Dictyoglomus thermophilum (strain ATCC 35947 / DSM 3960 / H-6-12).